We begin with the raw amino-acid sequence, 409 residues long: Outer membrane protein YopM (409 aa).

LRR repeat units lie at residues 72–91 (QAHELELNNLGLSSLPELPP), 92–113 (HLESLVASCNSLTELPELPQSL), 114–131 (KSLLVDNNNLKALSDLPP), 132–153 (LLEYLGVSNNQLEKLPELQNSS), 154–173 (FLKIIDVDNNSLKKLPDLPP), 174–195 (SLEFIAAGNNQLEELPELQNLP), 196–215 (FLTAIYADNNSLKKLPDLPL), 216–237 (SLESIVAGNNILEELPELQNLP), 238–257 (FLTTIYADNNLLKTLPDLPP), 258–279 (SLEALNVRDNYLTDLPELPQSL), 280–297 (TFLDVSENIFSGLSELPP), 298–317 (NLYYLNASSNEIRSLCDLPP), 318–339 (SLEELNVSNNKLIELPALPPRL), 340–357 (ERLIASFNHLAEVPELPQ), and 358–379 (NLKQLHVEYNPLREFPDIPESV). Ca(2+) contacts are provided by N246 and D266. Ca(2+) is bound by residues N307, E308, and N326.

Belongs to the LRR-containing bacterial E3 ligase family. As to quaternary structure, homotetramer forming a hollow cylinder with an inner diameter of approximately 35 angstroms.

It is found in the cell outer membrane. It localises to the secreted. Effector proteins function to alter host cell physiology and promote bacterial survival in host tissues. This chain is Outer membrane protein YopM (yopM), found in Yersinia pestis.